The sequence spans 173 residues: Adenine phosphoribosyltransferase (173 aa).

The protein belongs to the purine/pyrimidine phosphoribosyltransferase family. In terms of assembly, homodimer.

The protein localises to the cytoplasm. It catalyses the reaction AMP + diphosphate = 5-phospho-alpha-D-ribose 1-diphosphate + adenine. It participates in purine metabolism; AMP biosynthesis via salvage pathway; AMP from adenine: step 1/1. In terms of biological role, catalyzes a salvage reaction resulting in the formation of AMP, that is energically less costly than de novo synthesis. The polypeptide is Adenine phosphoribosyltransferase (Macrococcus caseolyticus (strain JCSC5402) (Macrococcoides caseolyticum)).